Here is a 184-residue protein sequence, read N- to C-terminus: Chromophore lyase CpcS/CpeS 1 (184 aa).

The protein belongs to the CpcS/CpeS biliprotein lyase family.

In terms of biological role, covalently attaches a chromophore to Cys residue(s) of phycobiliproteins. The polypeptide is Chromophore lyase CpcS/CpeS 1 (Synechococcus sp. (strain JA-3-3Ab) (Cyanobacteria bacterium Yellowstone A-Prime)).